The chain runs to 362 residues: Aminomethyltransferase (362 aa).

This sequence belongs to the GcvT family. As to quaternary structure, the glycine cleavage system is composed of four proteins: P, T, L and H.

The enzyme catalyses N(6)-[(R)-S(8)-aminomethyldihydrolipoyl]-L-lysyl-[protein] + (6S)-5,6,7,8-tetrahydrofolate = N(6)-[(R)-dihydrolipoyl]-L-lysyl-[protein] + (6R)-5,10-methylene-5,6,7,8-tetrahydrofolate + NH4(+). In terms of biological role, the glycine cleavage system catalyzes the degradation of glycine. The chain is Aminomethyltransferase from Colwellia psychrerythraea (strain 34H / ATCC BAA-681) (Vibrio psychroerythus).